We begin with the raw amino-acid sequence, 303 residues long: Recombination-associated protein RdgC (303 aa).

The protein belongs to the RdgC family.

It localises to the cytoplasm. It is found in the nucleoid. Its function is as follows. May be involved in recombination. This Shewanella halifaxensis (strain HAW-EB4) protein is Recombination-associated protein RdgC.